We begin with the raw amino-acid sequence, 892 residues long: UPF0182 protein MCA2716 (892 aa).

7 helical membrane passes run 7-27 (LLTS…AIVL), 57-77 (ILSG…FWAA), 107-127 (GALP…ALPF), 163-183 (ILVL…VMVA), 206-226 (IHLN…YVLQ), 252-272 (LPLI…ALWF), and 281-301 (LALT…IDVV).

Belongs to the UPF0182 family.

It is found in the cell membrane. The sequence is that of UPF0182 protein MCA2716 from Methylococcus capsulatus (strain ATCC 33009 / NCIMB 11132 / Bath).